The primary structure comprises 379 residues: ATP-sensitive inward rectifier potassium channel 10 (379 aa).

Over 1 to 61 (MTSVAKVYYS…LKDLWTTFID (61 aa)) the chain is Cytoplasmic. A 1,2-dioctanoyl-sn-glycero-3-phospho-(1D-myo-inositol-4,5-bisphosphate)-binding site is contributed by R36. Residues 62–88 (MQWRYKLLLFSATFAGTWFLFGVVWYL) form a helical membrane-spanning segment. Residues 89–114 (VAVAHGDLLELDPPANHTPCVVQVHT) are Extracellular-facing. A disulfide bridge links C108 with C140. An intramembrane region (discontinuously helical; Pore-forming) is located at residues 115-131 (LTGAFLFSLESQTTIGY). The Selectivity filter signature appears at 128–133 (TIGYGF). Residues 132–140 (GFRYISEEC) are Extracellular-facing. A helical membrane pass occupies residues 141 to 166 (PLAIVLLIAQLVLTTILEIFITGTFL). The Cytoplasmic portion of the chain corresponds to 167-379 (AKIARPKKRA…SALSVRISNV (213 aa)). Positions 168, 171, and 173 each coordinate 1,2-dioctanoyl-sn-glycero-3-phospho-(1D-myo-inositol-4,5-bisphosphate). Residue 210-217 (GCQVTGKL) participates in ATP binding.

Belongs to the inward rectifier-type potassium channel (TC 1.A.2.1) family. KCNJ10 subfamily. Homotetramer. In kidney cells, it forms heteromeric channels with Kir5.1/KCNJ16; this interaction is required for KCNJ16 localization to the basolateral membrane. Interacts with MAGI1, alone and possibly as a heteromer with KCNJ16; this interaction may facilitate KCNJ10/KCNJ16 potassium channel expression at the basolateral membrane in kidney cells. Interacts with PATJ. Expressed in kidney (at protein level). In the nephron, expressed in the distal convoluted tubule, the connecting tubule, the collecting duct and cortical thick ascending limbs.

The protein localises to the membrane. It is found in the basolateral cell membrane. The enzyme catalyses K(+)(in) = K(+)(out). With respect to regulation, channel activity is strongly regulated by variations of cytosolic pH; channels are activated by alkaline and inhibited by acidic pH values. Inhibited by Ba(2+) and Cs(+). Activated by phosphatidylinositol 4,5 biphosphate (PtdIns(4,5)P2). In terms of biological role, may be responsible for potassium buffering action of glial cells in the brain. Inward rectifier potassium channels are characterized by a greater tendency to allow potassium to flow into the cell rather than out of it. Their voltage dependence is regulated by the concentration of extracellular potassium; as external potassium is raised, the voltage range of the channel opening shifts to more positive voltages. The inward rectification is mainly due to the blockage of outward current by internal magnesium. Can be blocked by extracellular barium and cesium. In the kidney, together with KCNJ16, mediates basolateral K(+) recycling in distal tubules; this process is critical for Na(+) reabsorption at the tubules. The protein is ATP-sensitive inward rectifier potassium channel 10 of Homo sapiens (Human).